Reading from the N-terminus, the 323-residue chain is Aquaporin-2 (323 aa).

Transmembrane regions (helical) follow at residues 32 to 54 (FLAV…FTHR), 74 to 96 (YVAG…SVLG), and 103 to 123 (CFCY…AIYA). Positions 85 to 87 (NPA) match the NPA 1 motif. N-linked (GlcNAc...) asparagine glycosylation is present at Asn143. The next 2 membrane-spanning stretches (helical) occupy residues 161-181 (GAFV…LSMV) and 193-213 (FPIA…YNAG). The NPA 2 signature appears at 217–219 (NPS). Residues 243–263 (YTWFFVPVVGSHAGAIVGAVI) traverse the membrane as a helical segment. N-linked (GlcNAc...) asparagine glycosylation occurs at Asn292.

The protein belongs to the MIP/aquaporin (TC 1.A.8) family.

It is found in the cell membrane. It carries out the reaction H2O(in) = H2O(out). The catalysed reaction is glycerol(in) = glycerol(out). Functionally, aquaglyceroporin that may modulate the water content and osmolytes during anhydrobiosis. The polypeptide is Aquaporin-2 (Milnesium tardigradum (Water bear)).